A 195-amino-acid chain; its full sequence is AP-4-A phosphorylase (195 aa).

Residues 1-17 (MSDEDRTDRATEDHTIF) are compositionally biased toward basic and acidic residues. Residues 1–20 (MSDEDRTDRATEDHTIFDRG) form a disordered region. In terms of domain architecture, HIT spans 57–166 (PFTEIPQLSD…VPRWGGDANF (110 aa)). The short motif at 151–155 (HLHVH) is the Histidine triad motif element. The active-site Tele-AMP-histidine intermediate is the His-153.

Homotetramer. The cofactor is a divalent metal cation.

It carries out the reaction ADP + ATP + H(+) = P(1),P(4)-bis(5'-adenosyl) tetraphosphate + phosphate. In terms of biological role, catabolizes diadenosine 5',5'''-P1,P4-tetraphosphate (Ap4A) into ADP and ATP. The protein is AP-4-A phosphorylase of Mycobacterium tuberculosis (strain CDC 1551 / Oshkosh).